A 150-amino-acid chain; its full sequence is C-type lectin 37Db (150 aa).

Positions 1–20 (MMVKLLLLFLVCWSALPLES) are cleaved as a signal peptide. Residues 31–148 (IGEKQYYISL…CYSSVAFICQ (118 aa)) form the C-type lectin domain. 2 cysteine pairs are disulfide-bonded: Cys52–Cys147 and Cys122–Cys139. Residues Asn107 and Asn115 are each glycosylated (N-linked (GlcNAc...) asparagine).

Its subcellular location is the secreted. Functionally, galactose-specific lectin that displays calcium-dependent activity. Binds to the surface of hemocytes and enhances hemocyte encapsulation and melanization. This is likely by interacting with carbohydrates on the surface of the hemocytes. Also displays agglutination activity against the Gram-negative bacterium E.coli. In Drosophila melanogaster (Fruit fly), this protein is C-type lectin 37Db.